A 342-amino-acid polypeptide reads, in one-letter code: UDP-N-acetylglucosamine--N-acetylmuramyl-(pentapeptide) pyrophosphoryl-undecaprenol N-acetylglucosamine transferase (342 aa).

Residues 10–12 (TGG), asparagine 124, serine 177, and glutamine 275 each bind UDP-N-acetyl-alpha-D-glucosamine.

It belongs to the glycosyltransferase 28 family. MurG subfamily.

It is found in the cell inner membrane. It carries out the reaction di-trans,octa-cis-undecaprenyl diphospho-N-acetyl-alpha-D-muramoyl-L-alanyl-D-glutamyl-meso-2,6-diaminopimeloyl-D-alanyl-D-alanine + UDP-N-acetyl-alpha-D-glucosamine = di-trans,octa-cis-undecaprenyl diphospho-[N-acetyl-alpha-D-glucosaminyl-(1-&gt;4)]-N-acetyl-alpha-D-muramoyl-L-alanyl-D-glutamyl-meso-2,6-diaminopimeloyl-D-alanyl-D-alanine + UDP + H(+). Its pathway is cell wall biogenesis; peptidoglycan biosynthesis. Functionally, cell wall formation. Catalyzes the transfer of a GlcNAc subunit on undecaprenyl-pyrophosphoryl-MurNAc-pentapeptide (lipid intermediate I) to form undecaprenyl-pyrophosphoryl-MurNAc-(pentapeptide)GlcNAc (lipid intermediate II). This is UDP-N-acetylglucosamine--N-acetylmuramyl-(pentapeptide) pyrophosphoryl-undecaprenol N-acetylglucosamine transferase from Campylobacter jejuni subsp. jejuni serotype O:6 (strain 81116 / NCTC 11828).